The following is a 62-amino-acid chain: Ubiquinol-cytochrome c reductase complex 6.7 kDa protein (62 aa).

The Mitochondrial matrix segment spans residues 2-25 (TSPAAAGNGLFKFLRPKLRPQSTD). A helical transmembrane segment spans residues 26–44 (IQAAAGWGVAAVTGALWVI). At 45–62 (QPWDFLRKTFIEKQEEEK) the chain is on the mitochondrial intermembrane side.

Belongs to the UQCR11/QCR10 family. Component of the ubiquinol-cytochrome c oxidoreductase (cytochrome b-c1 complex, complex III, CIII), a multisubunit enzyme composed of 3 respiratory subunits cytochrome b, cytochrome c1 and Rieske protein, 2 core protein subunits, and additional low-molecular weight protein subunits. The complex exists as an obligatory dimer and forms supercomplexes (SCs) in the inner mitochondrial membrane with cytochrome c oxidase (complex IV, CIV).

It is found in the mitochondrion inner membrane. Component of the ubiquinol-cytochrome c oxidoreductase, a multisubunit transmembrane complex that is part of the mitochondrial electron transport chain which drives oxidative phosphorylation. The respiratory chain contains 3 multisubunit complexes succinate dehydrogenase (complex II, CII), ubiquinol-cytochrome c oxidoreductase (cytochrome b-c1 complex, complex III, CIII) and cytochrome c oxidase (complex IV, CIV), that cooperate to transfer electrons derived from NADH and succinate to molecular oxygen, creating an electrochemical gradient over the inner membrane that drives transmembrane transport and the ATP synthase. The cytochrome b-c1 complex catalyzes electron transfer from ubiquinol to cytochrome c, linking this redox reaction to translocation of protons across the mitochondrial inner membrane, with protons being carried across the membrane as hydrogens on the quinol. In the process called Q cycle, 2 protons are consumed from the matrix, 4 protons are released into the intermembrane space and 2 electrons are passed to cytochrome c. QCR10 has a role in CIII assembly and RIP1 stability. This is Ubiquinol-cytochrome c reductase complex 6.7 kDa protein from Solanum tuberosum (Potato).